We begin with the raw amino-acid sequence, 532 residues long: Undecaprenyl-phosphate glucose phosphotransferase (532 aa).

Helical transmembrane passes span 81–101 (QVVVLSDAFCVCLAVVACIAW), 110–130 (ELSGALLLANIMAAGAFFLFP), 155–175 (VAFGEVVFCTVLVMLSWPFGV), 183–203 (WLTFVVAILFVERCVGTYILH), and 344–364 (TASVLLLLALAPLLTLVALAI).

The protein belongs to the bacterial sugar transferase family.

It is found in the membrane. The catalysed reaction is di-trans,octa-cis-undecaprenyl phosphate + UDP-alpha-D-glucose = alpha-D-glucosyl di-trans,octa-cis-undecaprenyl diphosphate + UMP. Its function is as follows. Involved in the biosynthesis of the exopolysaccharide acetan, a water-soluble polysaccharide involved in production of bacterial cellulose (BC). The protein is Undecaprenyl-phosphate glucose phosphotransferase (aceA) of Komagataeibacter xylinus (Gluconacetobacter xylinus).